Consider the following 604-residue polypeptide: Elongation factor 4 (604 aa).

Residues 7–189 enclose the tr-type G domain; the sequence is SKIRNFCIIA…SIVHLVPPPS (183 aa). GTP-binding positions include 19-24 and 136-139; these read DHGKST and NKID.

The protein belongs to the TRAFAC class translation factor GTPase superfamily. Classic translation factor GTPase family. LepA subfamily.

Its subcellular location is the cell inner membrane. It catalyses the reaction GTP + H2O = GDP + phosphate + H(+). In terms of biological role, required for accurate and efficient protein synthesis under certain stress conditions. May act as a fidelity factor of the translation reaction, by catalyzing a one-codon backward translocation of tRNAs on improperly translocated ribosomes. Back-translocation proceeds from a post-translocation (POST) complex to a pre-translocation (PRE) complex, thus giving elongation factor G a second chance to translocate the tRNAs correctly. Binds to ribosomes in a GTP-dependent manner. This Synechococcus sp. (strain ATCC 27144 / PCC 6301 / SAUG 1402/1) (Anacystis nidulans) protein is Elongation factor 4.